We begin with the raw amino-acid sequence, 212 residues long: Adenylate kinase (212 aa).

Glycine 10–threonine 15 contributes to the ATP binding site. The tract at residues serine 30–valine 59 is NMP. AMP-binding positions include threonine 31, arginine 36, glutamate 57 to valine 59, glycine 86 to arginine 89, and glutamine 93. The LID stretch occupies residues glycine 127 to aspartate 159. ATP contacts are provided by residues arginine 128 and threonine 137–phenylalanine 138. The AMP site is built by arginine 156 and arginine 167. Glutamine 195 contributes to the ATP binding site.

The protein belongs to the adenylate kinase family. As to quaternary structure, monomer.

It localises to the cytoplasm. It catalyses the reaction AMP + ATP = 2 ADP. It functions in the pathway purine metabolism; AMP biosynthesis via salvage pathway; AMP from ADP: step 1/1. In terms of biological role, catalyzes the reversible transfer of the terminal phosphate group between ATP and AMP. Plays an important role in cellular energy homeostasis and in adenine nucleotide metabolism. This is Adenylate kinase from Streptococcus agalactiae serotype Ia (strain ATCC 27591 / A909 / CDC SS700).